Consider the following 598-residue polypeptide: Protein unc-93 homolog B1 (598 aa).

Residues 1–36 form a disordered region; the sequence is MEVEPPLYPVAGAAGPQGDEDRHGVPDGPEAPLDEL. The next 5 helical transmembrane spans lie at 64-84, 110-130, 132-152, 160-180, and 223-243; these read VLAASTGVTLTYGVYLGLLQM, KMLMGINVTPIAALLYTPVLI, FFGTKWMMFLAVGIYALFVST, TLVPSAVALGMAIVPLWASMG, and IFYSFFHLSFACAQLPMIYFL. Residues asparagine 251 and asparagine 272 are each glycosylated (N-linked (GlcNAc...) asparagine). A run of 5 helical transmembrane segments spans residues 285-305, 343-363, 378-398, 403-423, and 428-448; these read LIVVESVLMAVAFLAMLMVLG, LVPFFIYSGFEVLFACTGFAL, LLIAYSLGASASSVLGLLGLW, VPLVAGAGLHLLLTLSLFFWA, and VLQHSWIFYFVAALWGVGSAL. Asparagine 449 carries N-linked (GlcNAc...) asparagine glycosylation. 2 helical membrane passes run 469–489 and 495–515; these read FIFTIYHWWQAVAIFVVYLGS and AKLAVLLVTLVAAAASYLWME. Positions 524-598 are disordered; sequence PRQPRIPKPQ…ALGGDGPEEQ (75 aa). Residues 544–554 show a composition bias toward acidic residues; it reads EDNSDESDMEG. Phosphoserine is present on residues serine 547 and serine 550.

It belongs to the unc-93 family. As to quaternary structure, interacts with TLR3, TLR5, TLR7, TLR8, TLR9 and TLR13 (probably via transmembrane domain). Post-translationally, N-glycosylated.

The protein resides in the endoplasmic reticulum membrane. Its subcellular location is the endosome. It localises to the lysosome. It is found in the cytoplasmic vesicle. The protein localises to the phagosome. Its function is as follows. Plays an important role in innate and adaptive immunity by regulating nucleotide-sensing Toll-like receptor (TLR) signaling. Required for the transport of a subset of TLRs (including TLR3, TLR7 and TLR9) from the endoplasmic reticulum to endolysosomes where they can engage pathogen nucleotides and activate signaling cascades. May play a role in autoreactive B-cells removal. The polypeptide is Protein unc-93 homolog B1 (Mus musculus (Mouse)).